We begin with the raw amino-acid sequence, 303 residues long: Quinolinate synthase (303 aa).

Iminosuccinate-binding residues include H24 and S41. C86 is a [4Fe-4S] cluster binding site. Iminosuccinate contacts are provided by residues 112-114 (YVN) and S129. C172 lines the [4Fe-4S] cluster pocket. Iminosuccinate-binding positions include 198–200 (HPE) and T215. Residue C260 coordinates [4Fe-4S] cluster.

The protein belongs to the quinolinate synthase family. Type 2 subfamily. [4Fe-4S] cluster serves as cofactor.

It localises to the cytoplasm. The enzyme catalyses iminosuccinate + dihydroxyacetone phosphate = quinolinate + phosphate + 2 H2O + H(+). It functions in the pathway cofactor biosynthesis; NAD(+) biosynthesis; quinolinate from iminoaspartate: step 1/1. Functionally, catalyzes the condensation of iminoaspartate with dihydroxyacetone phosphate to form quinolinate. In Clostridium kluyveri (strain NBRC 12016), this protein is Quinolinate synthase.